The following is a 314-amino-acid chain: Hydroxyethylthiazole kinase (314 aa).

The span at 1–13 shows a compositional bias: low complexity; the sequence is MSNSASSFADVSS. A disordered region spans residues 1–24; that stretch reads MSNSASSFADVSSGCTAGTPVPAD. Position 70 (methionine 70) interacts with substrate. Positions 145 and 217 each coordinate ATP. A substrate-binding site is contributed by glycine 244.

Belongs to the Thz kinase family. The cofactor is Mg(2+).

It carries out the reaction 5-(2-hydroxyethyl)-4-methylthiazole + ATP = 4-methyl-5-(2-phosphooxyethyl)-thiazole + ADP + H(+). It participates in cofactor biosynthesis; thiamine diphosphate biosynthesis; 4-methyl-5-(2-phosphoethyl)-thiazole from 5-(2-hydroxyethyl)-4-methylthiazole: step 1/1. In terms of biological role, catalyzes the phosphorylation of the hydroxyl group of 4-methyl-5-beta-hydroxyethylthiazole (THZ). This chain is Hydroxyethylthiazole kinase, found in Bifidobacterium longum subsp. infantis (strain ATCC 15697 / DSM 20088 / JCM 1222 / NCTC 11817 / S12).